The sequence spans 148 residues: Snaclec 7 (148 aa).

Positions 1–23 (MGRFIFVSFGLLVVFLSLSGTGA) are cleaved as a signal peptide. Intrachain disulfides connect cysteine 27–cysteine 38, cysteine 55–cysteine 144, and cysteine 121–cysteine 136. Residues 34–145 (HERHCYKVIN…CSSTHPFVCK (112 aa)) enclose the C-type lectin domain.

It belongs to the snaclec family. Heterodimer; disulfide-linked. Expressed by the venom gland.

It localises to the secreted. Functionally, interferes with one step of hemostasis (modulation of platelet aggregation, or coagulation cascade, for example). This Echis pyramidum leakeyi (Leakey's carpet viper) protein is Snaclec 7.